We begin with the raw amino-acid sequence, 118 residues long: Basic phospholipase A2 PA-12C (118 aa).

Disulfide bonds link Cys11–Cys71, Cys27–Cys117, Cys29–Cys45, Cys44–Cys98, Cys51–Cys91, Cys60–Cys84, and Cys78–Cys89. Ca(2+) contacts are provided by Tyr28, Gly30, and Gly32. His48 is an active-site residue. Position 49 (Asp49) interacts with Ca(2+). Residue Asp92 is part of the active site.

This sequence belongs to the phospholipase A2 family. Group I subfamily. D49 sub-subfamily. The cofactor is Ca(2+). Expressed by the venom gland.

Its subcellular location is the secreted. It catalyses the reaction a 1,2-diacyl-sn-glycero-3-phosphocholine + H2O = a 1-acyl-sn-glycero-3-phosphocholine + a fatty acid + H(+). In terms of biological role, PLA2 catalyzes the calcium-dependent hydrolysis of the 2-acyl groups in 3-sn-phosphoglycerides. The polypeptide is Basic phospholipase A2 PA-12C (Pseudechis australis (Mulga snake)).